Here is a 147-residue protein sequence, read N- to C-terminus: ATP synthase subunit 9, mitochondrial (147 aa).

A mitochondrion-targeting transit peptide spans 1–66; that stretch reads MASTRVLASR…TTRQAFQKRA (66 aa). 2 consecutive transmembrane segments (helical) span residues 86-106 and 123-143; these read SAAI…AALL and AILG…VALM.

This sequence belongs to the ATPase C chain family. In terms of assembly, F-type ATPases have 2 components, CF(1) - the catalytic core - and CF(0) - the membrane proton channel. CF(1) has five subunits: alpha(3), beta(3), gamma(1), delta(1), epsilon(1). CF(0) has three main subunits: a, b and c.

The protein localises to the mitochondrion membrane. Functionally, mitochondrial membrane ATP synthase (F(1)F(0) ATP synthase or Complex V) produces ATP from ADP in the presence of a proton gradient across the membrane which is generated by electron transport complexes of the respiratory chain. F-type ATPases consist of two structural domains, F(1) - containing the extramembraneous catalytic core and F(0) - containing the membrane proton channel, linked together by a central stalk and a peripheral stalk. During catalysis, ATP synthesis in the catalytic domain of F(1) is coupled via a rotary mechanism of the central stalk subunits to proton translocation. Part of the complex F(0) domain. A homomeric c-ring of probably 10 subunits is part of the complex rotary element. This chain is ATP synthase subunit 9, mitochondrial (oli), found in Neurospora crassa (strain ATCC 24698 / 74-OR23-1A / CBS 708.71 / DSM 1257 / FGSC 987).